A 513-amino-acid chain; its full sequence is Fructose import ATP-binding protein FruK (513 aa).

2 ABC transporter domains span residues 8–244 (VVMK…IGKS) and 262–505 (PGEK…IANT). 40–47 (GENGAGKS) is a binding site for ATP.

The protein belongs to the ABC transporter superfamily. The complex is composed of an ATP-binding protein (FruK), two transmembrane proteins (FruF and FruG) and a solute-binding protein (FruE).

The protein localises to the cell membrane. The enzyme catalyses D-fructose(out) + ATP + H2O = D-fructose(in) + ADP + phosphate + H(+). Functionally, part of the high-affinity ABC transporter complex FruEKFG involved in fructose uptake. Can also transport ribose and xylose, with lower affinity. Probably responsible for energy coupling to the transport system. In Bifidobacterium longum (strain NCC 2705), this protein is Fructose import ATP-binding protein FruK.